The following is a 337-amino-acid chain: tRNA N6-adenosine threonylcarbamoyltransferase (337 aa).

Fe cation is bound by residues His-111 and His-115. Residues 134-138 (LVSGG), Asp-167, Gly-180, and Asn-272 each bind substrate. Asp-300 contacts Fe cation.

It belongs to the KAE1 / TsaD family. The cofactor is Fe(2+).

It localises to the cytoplasm. It catalyses the reaction L-threonylcarbamoyladenylate + adenosine(37) in tRNA = N(6)-L-threonylcarbamoyladenosine(37) in tRNA + AMP + H(+). Its function is as follows. Required for the formation of a threonylcarbamoyl group on adenosine at position 37 (t(6)A37) in tRNAs that read codons beginning with adenine. Is involved in the transfer of the threonylcarbamoyl moiety of threonylcarbamoyl-AMP (TC-AMP) to the N6 group of A37, together with TsaE and TsaB. TsaD likely plays a direct catalytic role in this reaction. In Cronobacter sakazakii (strain ATCC BAA-894) (Enterobacter sakazakii), this protein is tRNA N6-adenosine threonylcarbamoyltransferase.